The sequence spans 672 residues: ATP-dependent zinc metalloprotease FtsH 1 (672 aa).

The interval 1–22 (MKKDSESNSSDKSNKEELSTGR) is disordered. Residues 1–23 (MKKDSESNSSDKSNKEELSTGRR) are Cytoplasmic-facing. A helical transmembrane segment spans residues 24–44 (GGNPMIIALVITVLAAMLFFN). Residues 45-141 (QPEPSSLISA…KFSPPDNTAA (97 aa)) lie on the Periplasmic side of the membrane. Residues 142–162 (ILNLLILVGLPLAIFFFIFMM) traverse the membrane as a helical segment. The Cytoplasmic portion of the chain corresponds to 163–672 (IRRTRNDMMG…TSNASARRED (510 aa)). 237-244 (GPPGTGKT) lines the ATP pocket. H458 provides a ligand contact to Zn(2+). Residue E459 is part of the active site. The Zn(2+) site is built by H462 and D534. The interval 642–672 (RLGDEEGKVEQIMAPEGAAERTSNASARRED) is disordered. Positions 662–672 (RTSNASARRED) are enriched in polar residues.

The protein in the central section; belongs to the AAA ATPase family. In the C-terminal section; belongs to the peptidase M41 family. As to quaternary structure, homohexamer. The cofactor is Zn(2+).

It localises to the cell inner membrane. Functionally, acts as a processive, ATP-dependent zinc metallopeptidase for both cytoplasmic and membrane proteins. Plays a role in the quality control of integral membrane proteins. The polypeptide is ATP-dependent zinc metalloprotease FtsH 1 (Rhodopirellula baltica (strain DSM 10527 / NCIMB 13988 / SH1)).